A 218-amino-acid polypeptide reads, in one-letter code: Probable nicotinate-nucleotide adenylyltransferase (218 aa).

The protein belongs to the NadD family.

The catalysed reaction is nicotinate beta-D-ribonucleotide + ATP + H(+) = deamido-NAD(+) + diphosphate. It participates in cofactor biosynthesis; NAD(+) biosynthesis; deamido-NAD(+) from nicotinate D-ribonucleotide: step 1/1. Functionally, catalyzes the reversible adenylation of nicotinate mononucleotide (NaMN) to nicotinic acid adenine dinucleotide (NaAD). The sequence is that of Probable nicotinate-nucleotide adenylyltransferase from Syntrophotalea carbinolica (strain DSM 2380 / NBRC 103641 / GraBd1) (Pelobacter carbinolicus).